The sequence spans 117 residues: MSNLAYQPEKQQRHAISPEKKVIVKKRASITLGEKVLLVLFAAAVLSVSLLIVSKAYAAYQTNIEVQKLEEQISSENKQIGDLEKSVADLSKPQRIMDIAKKNGLNLKDKKVKNIQE.

At 1-35 (MSNLAYQPEKQQRHAISPEKKVIVKKRASITLGEK) the chain is on the cytoplasmic side. The chain crosses the membrane as a helical span at residues 36–56 (VLLVLFAAAVLSVSLLIVSKA). At 57 to 117 (YAAYQTNIEV…KDKKVKNIQE (61 aa)) the chain is on the extracellular side.

It belongs to the FtsL family. Monomer. Interacts with DivIB and DivIC. Interaction with DivIC stabilizes FtsL against RasP cleavage. In terms of processing, cleaved by RasP. Cleavage is important for turnover and function of FtsL.

The protein resides in the cell membrane. Its function is as follows. Essential cell division protein that may play a structural role. Probably involved in the regulation of the timing of cell division. Also required for sporulation. The protein is Cell division protein FtsL of Bacillus subtilis (strain 168).